Consider the following 556-residue polypeptide: Arginine--tRNA ligase (556 aa).

The short motif at 133–143 (ANPTGPIHIGH) is the 'HIGH' region element.

Belongs to the class-I aminoacyl-tRNA synthetase family. As to quaternary structure, monomer.

It localises to the cytoplasm. It catalyses the reaction tRNA(Arg) + L-arginine + ATP = L-arginyl-tRNA(Arg) + AMP + diphosphate. The polypeptide is Arginine--tRNA ligase (Dehalococcoides mccartyi (strain ATCC BAA-2100 / JCM 16839 / KCTC 5957 / BAV1)).